The chain runs to 72 residues: Translation initiation factor IF-1 (72 aa).

Residues 1 to 72 form the S1-like domain; the sequence is MAKEKDTIRT…PTRGRIVYRK (72 aa).

Belongs to the IF-1 family. As to quaternary structure, component of the 30S ribosomal translation pre-initiation complex which assembles on the 30S ribosome in the order IF-2 and IF-3, IF-1 and N-formylmethionyl-tRNA(fMet); mRNA recruitment can occur at any time during PIC assembly.

Its subcellular location is the cytoplasm. Functionally, one of the essential components for the initiation of protein synthesis. Stabilizes the binding of IF-2 and IF-3 on the 30S subunit to which N-formylmethionyl-tRNA(fMet) subsequently binds. Helps modulate mRNA selection, yielding the 30S pre-initiation complex (PIC). Upon addition of the 50S ribosomal subunit IF-1, IF-2 and IF-3 are released leaving the mature 70S translation initiation complex. This chain is Translation initiation factor IF-1, found in Thermus thermophilus (strain ATCC BAA-163 / DSM 7039 / HB27).